The sequence spans 88 residues: Small ribosomal subunit protein uS15 (88 aa).

It belongs to the universal ribosomal protein uS15 family. In terms of assembly, part of the 30S ribosomal subunit. Forms a bridge to the 50S subunit in the 70S ribosome, contacting the 23S rRNA.

Its function is as follows. One of the primary rRNA binding proteins, it binds directly to 16S rRNA where it helps nucleate assembly of the platform of the 30S subunit by binding and bridging several RNA helices of the 16S rRNA. Forms an intersubunit bridge (bridge B4) with the 23S rRNA of the 50S subunit in the ribosome. This chain is Small ribosomal subunit protein uS15, found in Borreliella afzelii (strain PKo) (Borrelia afzelii).